The sequence spans 838 residues: E3 ubiquitin-protein ligase RNF19A (838 aa).

The interval 128 to 351 (DFIECPLCLL…LSPSGCTFWG (224 aa)) is TRIAD supradomain. 18 residues coordinate Zn(2+): C132, C135, C150, H152, C155, C158, C176, C179, C219, C224, C241, C246, C251, C254, H259, C264, C301, and C304. Residues 132-179 (CPLCLLRHSKDRFPEIMTCHHRSCVDCLRQYLRIEISESRVNISCPEC) form an RING-type 1 zinc finger. The segment at 199 to 264 (EKYEEFMLRR…KQIWHPNQTC (66 aa)) adopts an IBR-type zinc-finger fold. An RING-type 2; atypical zinc finger spans residues 301–332 (CPRCAAYIIKMNDGSCNHMTCAVCGCEFCWLC). Residue C316 is part of the active site. Positions 321, 324, 329, 332, 340, and 347 each coordinate Zn(2+). 2 helical membrane passes run 368–388 (LVGA…AMII) and 424–444 (VIVS…IMLA). Disordered regions lie at residues 622-685 (SKPS…SNMK) and 700-721 (QQST…PSVA). S631 bears the Phosphoserine mark. Residues 631 to 644 (SGSSSVDDGSAARS) are compositionally biased toward low complexity. Residues 660–838 (ATKWSKEATA…ELKVAIQTDI (179 aa)) are interaction with CASR. The segment covering 671–683 (KKSKSGKLRKKSN) has biased composition (basic residues). Positions 700-717 (QQSTNSSEFEAPSLSDSM) are enriched in polar residues.

Belongs to the RBR family. RNF19 subfamily. As to quaternary structure, interacts with UBE2L3 and UBE2L6. Also interacts with transcription factor Sp1. Interacts with SNCAIP, CASR and VCP.

It is found in the membrane. It localises to the cytoplasm. The protein resides in the cytoskeleton. The protein localises to the microtubule organizing center. Its subcellular location is the centrosome. It carries out the reaction [E2 ubiquitin-conjugating enzyme]-S-ubiquitinyl-L-cysteine + [acceptor protein]-L-lysine = [E2 ubiquitin-conjugating enzyme]-L-cysteine + [acceptor protein]-N(6)-ubiquitinyl-L-lysine.. It functions in the pathway protein modification; protein ubiquitination. Its function is as follows. E3 ubiquitin-protein ligase which accepts ubiquitin from E2 ubiquitin-conjugating enzymes UBE2L3 and UBE2L6 in the form of a thioester and then directly transfers the ubiquitin to targeted substrates, such as SNCAIP or CASR. This Sus scrofa (Pig) protein is E3 ubiquitin-protein ligase RNF19A (RNF19A).